The following is a 37-amino-acid chain: Large ribosomal subunit protein bL36A (37 aa).

It belongs to the bacterial ribosomal protein bL36 family.

The polypeptide is Large ribosomal subunit protein bL36A (Kocuria rhizophila (strain ATCC 9341 / DSM 348 / NBRC 103217 / DC2201)).